The primary structure comprises 152 residues: Ribonuclease H (152 aa).

Positions 1 to 142 constitute an RNase H type-1 domain; sequence MDSKVVIYTD…ADKLAVQGRE (142 aa). Positions 10, 48, 70, and 134 each coordinate Mg(2+).

It belongs to the RNase H family. In terms of assembly, monomer. Mg(2+) serves as cofactor.

It localises to the cytoplasm. The enzyme catalyses Endonucleolytic cleavage to 5'-phosphomonoester.. In terms of biological role, endonuclease that specifically degrades the RNA of RNA-DNA hybrids. The sequence is that of Ribonuclease H from Rickettsia felis (strain ATCC VR-1525 / URRWXCal2) (Rickettsia azadi).